Consider the following 1017-residue polypeptide: Anaphase-promoting complex subunit 5 (1017 aa).

TPR repeat units follow at residues 30 to 63 (KQSL…EKEL), 182 to 214 (DMSM…SPLD), 252 to 286 (VKRV…VNGQ), 337 to 370 (PYAV…AQER), and 508 to 541 (NNNN…WNDI). Positions 451 to 525 (INSNNYNSNN…NNNSSNSNNN (75 aa)) are enriched in low complexity. Disordered regions lie at residues 451 to 527 (INSN…NNGG) and 617 to 636 (NNNN…QQQN). TPR repeat units lie at residues 642-675 (LLSF…YKTQ), 756-790 (VICY…SRDF), 838-871 (ADSN…VLSD), 876-908 (SQLY…FLQL), and 931-964 (KEIY…LVPS).

This sequence belongs to the APC5 family. The APC/C is composed of at least 13 subunits that stay tightly associated throughout the cell cycle: anapc1, anapc2, anapc3, anapc4, anapc5, anapc6, anapc7, anapc8, anapc10, anapc11, cdc20, cdc26 and cdh1.

Its subcellular location is the nucleus. Its pathway is protein modification; protein ubiquitination. Component of the anaphase promoting complex/cyclosome (APC/C), a cell cycle-regulated E3 ubiquitin-protein ligase complex that controls progression through mitosis and the G1 phase of the cell cycle. This chain is Anaphase-promoting complex subunit 5 (anapc5), found in Dictyostelium discoideum (Social amoeba).